Here is a 73-residue protein sequence, read N- to C-terminus: Omega-conotoxin GVIA (73 aa).

A signal peptide spans 1 to 22 (MKLTCVVIVAVLLLTACQLITA). Positions 23–45 (DDSRGTQKHRALGSTTELSLSTR) are excised as a propeptide. 3 disulfide bridges follow: Cys-46–Cys-61, Cys-53–Cys-64, and Cys-60–Cys-71. 4-hydroxyproline occurs at positions 49, 55, and 66. Tyr-72 is subject to Tyrosine amide; in form omega-conotoxin GVIA.

Belongs to the conotoxin O1 superfamily. In terms of tissue distribution, expressed by the venom duct.

Its subcellular location is the secreted. In terms of biological role, omega-conotoxins act at presynaptic membranes, they bind and block voltage-gated calcium channels (Cav). This toxin blocks N-type calcium channels (Cav2.2/CACNA1B) with a high potency (it displaces [125I]GVIA with an IC(50)=3.7-38 pM). This Conus geographus (Geography cone) protein is Omega-conotoxin GVIA.